Reading from the N-terminus, the 210-residue chain is Thymidylate kinase (210 aa).

10-17 (GPEGAGKS) contributes to the ATP binding site.

Belongs to the thymidylate kinase family.

The catalysed reaction is dTMP + ATP = dTDP + ADP. In terms of biological role, phosphorylation of dTMP to form dTDP in both de novo and salvage pathways of dTTP synthesis. This Pseudomonas syringae pv. tomato (strain ATCC BAA-871 / DC3000) protein is Thymidylate kinase.